A 68-amino-acid chain; its full sequence is Ribosome modulation factor (68 aa).

Belongs to the ribosome modulation factor family.

It is found in the cytoplasm. Its function is as follows. During stationary phase, converts 70S ribosomes to an inactive dimeric form (100S ribosomes). The polypeptide is Ribosome modulation factor (Saccharophagus degradans (strain 2-40 / ATCC 43961 / DSM 17024)).